A 264-amino-acid polypeptide reads, in one-letter code: tRNA pseudouridine synthase A (264 aa).

The active-site Nucleophile is Asp-51. A substrate-binding site is contributed by Tyr-109.

It belongs to the tRNA pseudouridine synthase TruA family. As to quaternary structure, homodimer.

It carries out the reaction uridine(38/39/40) in tRNA = pseudouridine(38/39/40) in tRNA. Formation of pseudouridine at positions 38, 39 and 40 in the anticodon stem and loop of transfer RNAs. The protein is tRNA pseudouridine synthase A of Vibrio atlanticus (strain LGP32) (Vibrio splendidus (strain Mel32)).